The following is a 799-amino-acid chain: Protein scabrous (799 aa).

The first 51 residues, 1-51 (MRDWQTFPDLQKKKVSRDHLNCPATMAGSNVLWPILLAVVLLQISVAFVSG), serve as a signal peptide directing secretion. A disordered region spans residues 287 to 316 (TRKDGSSASVEEESGSQEANQEQTGLETTA). Residue asparagine 372 is glycosylated (N-linked (GlcNAc...) asparagine). The span at 489–498 (LNKPHKRPHH) shows a compositional bias: basic residues. The interval 489 to 509 (LNKPHKRPHHQNVQAQMPQDD) is disordered. The Fibrinogen C-terminal domain occupies 533 to 737 (AIINKLPHDC…SSRMLVKRLP (205 aa)). The cysteines at positions 542 and 568 are disulfide-linked. Asparagine 587, asparagine 618, and asparagine 660 each carry an N-linked (GlcNAc...) asparagine glycan. A disulfide bridge links cysteine 687 with cysteine 700. Asparagine 744 and asparagine 787 each carry an N-linked (GlcNAc...) asparagine glycan.

Post-translationally, possesses five pairs of dibasic residues that may be the target of proteolytic processing.

The protein localises to the late endosome. In terms of biological role, involved in regulation of neurogenesis. May encode a lateral inhibitor of R8 differentiation. In conjunction with Gp150, promotes Notch activation in response to Delta by regulating acquisition of insensitivity to Delta in a subset of cells. This chain is Protein scabrous (sca), found in Drosophila melanogaster (Fruit fly).